Reading from the N-terminus, the 185-residue chain is ATP-dependent protease subunit HslV (185 aa).

Residue T12 is part of the active site. 3 residues coordinate Na(+): A168, C171, and T174.

It belongs to the peptidase T1B family. HslV subfamily. In terms of assembly, a double ring-shaped homohexamer of HslV is capped on each side by a ring-shaped HslU homohexamer. The assembly of the HslU/HslV complex is dependent on binding of ATP.

Its subcellular location is the cytoplasm. The catalysed reaction is ATP-dependent cleavage of peptide bonds with broad specificity.. With respect to regulation, allosterically activated by HslU binding. Functionally, protease subunit of a proteasome-like degradation complex believed to be a general protein degrading machinery. The protein is ATP-dependent protease subunit HslV of Cereibacter sphaeroides (strain ATCC 17023 / DSM 158 / JCM 6121 / CCUG 31486 / LMG 2827 / NBRC 12203 / NCIMB 8253 / ATH 2.4.1.) (Rhodobacter sphaeroides).